A 109-amino-acid chain; its full sequence is C-X-C motif chemokine 13 (109 aa).

The signal sequence occupies residues 1 to 21; sequence MRLSTATLLLLLASCLSPGHG. 2 disulfides stabilise this stretch: Cys32-Cys59 and Cys34-Cys75.

Belongs to the intercrine alpha (chemokine CxC) family. In terms of tissue distribution, found in spleen (B-cell-rich zone or follicles), Peyer patches (strongest within germinal centers and extending to the mantle zone) and lymph nodes (in reticular pattern in follicles).

The protein resides in the secreted. Functionally, strongly chemotactic for B-lymphocytes, weakly for spleen monocytes and macrophages but no chemotactic activity for granulocytes. Binds to BLR1/CXCR5. May play a role in directing the migration of B-lymphocytes to follicles in secondary lymphoid organs. This Mus musculus (Mouse) protein is C-X-C motif chemokine 13 (Cxcl13).